A 475-amino-acid polypeptide reads, in one-letter code: Ribulose bisphosphate carboxylase large chain (475 aa).

Positions 1 to 2 are excised as a propeptide; sequence MS. An N-acetylproline modification is found at proline 3. N6,N6,N6-trimethyllysine is present on lysine 14. The substrate site is built by asparagine 123 and threonine 173. The active-site Proton acceptor is lysine 175. Lysine 177 contributes to the substrate binding site. Residues lysine 201, aspartate 203, and glutamate 204 each contribute to the Mg(2+) site. Lysine 201 bears the N6-carboxylysine mark. Catalysis depends on histidine 294, which acts as the Proton acceptor. Substrate-binding residues include arginine 295, histidine 327, and serine 379.

Belongs to the RuBisCO large chain family. Type I subfamily. In terms of assembly, heterohexadecamer of 8 large chains and 8 small chains; disulfide-linked. The disulfide link is formed within the large subunit homodimers. Mg(2+) serves as cofactor. The disulfide bond which can form in the large chain dimeric partners within the hexadecamer appears to be associated with oxidative stress and protein turnover.

It localises to the plastid. It is found in the chloroplast. It carries out the reaction 2 (2R)-3-phosphoglycerate + 2 H(+) = D-ribulose 1,5-bisphosphate + CO2 + H2O. The catalysed reaction is D-ribulose 1,5-bisphosphate + O2 = 2-phosphoglycolate + (2R)-3-phosphoglycerate + 2 H(+). Functionally, ruBisCO catalyzes two reactions: the carboxylation of D-ribulose 1,5-bisphosphate, the primary event in carbon dioxide fixation, as well as the oxidative fragmentation of the pentose substrate in the photorespiration process. Both reactions occur simultaneously and in competition at the same active site. The polypeptide is Ribulose bisphosphate carboxylase large chain (Pelargonium hortorum (Common geranium)).